The following is a 205-amino-acid chain: Glycerol-3-phosphate acyltransferase (205 aa).

5 helical membrane passes run 4–24, 80–100, 107–127, 130–150, and 155–175; these read IAPGLVLLAYLCGSISSAILV, PFWLGLVAIAACVGHIWPVFF, GVATAFGAIAPIGLDLTGVMA, WLLTILLSGYSSLGAIVSALI, and VWWFKPQYTFPVSMLSCLILL.

Belongs to the PlsY family. Probably interacts with PlsX.

It is found in the cell inner membrane. The catalysed reaction is an acyl phosphate + sn-glycerol 3-phosphate = a 1-acyl-sn-glycero-3-phosphate + phosphate. It functions in the pathway lipid metabolism; phospholipid metabolism. Its function is as follows. Catalyzes the transfer of an acyl group from acyl-phosphate (acyl-PO(4)) to glycerol-3-phosphate (G3P) to form lysophosphatidic acid (LPA). This enzyme utilizes acyl-phosphate as fatty acyl donor, but not acyl-CoA or acyl-ACP. The polypeptide is Glycerol-3-phosphate acyltransferase (Klebsiella pneumoniae (strain 342)).